Consider the following 325-residue polypeptide: Protease HtpX homolog (325 aa).

Residues Ile-20 to Met-40 form a helical membrane-spanning segment. His-130 contributes to the Zn(2+) binding site. Glu-131 is an active-site residue. Residue His-134 coordinates Zn(2+). 2 consecutive transmembrane segments (helical) span residues Ile-145–Gly-165 and Val-173–Val-193. Residue Glu-202 coordinates Zn(2+). The disordered stretch occupies residues Ala-288–Ser-325. The span at Arg-306–Ser-325 shows a compositional bias: low complexity.

This sequence belongs to the peptidase M48B family. The cofactor is Zn(2+).

It localises to the cell inner membrane. The protein is Protease HtpX homolog of Brucella suis (strain ATCC 23445 / NCTC 10510).